The sequence spans 273 residues: Inositol monophosphatase 1 (273 aa).

Residues Glu-71, Asp-91, Val-93, and Asp-94 each contribute to the Mg(2+) site. Position 71 (Glu-71) interacts with substrate. Substrate-binding positions include 93–96, 194–196, and Asp-221; these read VDGT and GSC. Asp-221 is a binding site for Mg(2+).

This sequence belongs to the inositol monophosphatase superfamily. Mg(2+) is required as a cofactor. As to expression, expressed in seedlings, flowers, young and matures green fruits. Detected in roots and stems.

The catalysed reaction is a myo-inositol phosphate + H2O = myo-inositol + phosphate. Its pathway is polyol metabolism; myo-inositol biosynthesis; myo-inositol from D-glucose 6-phosphate: step 2/2. In terms of biological role, responsible for the provision of inositol required for synthesis of phosphatidylinositol and polyphosphoinositides. The sequence is that of Inositol monophosphatase 1 (IMP1) from Solanum lycopersicum (Tomato).